Reading from the N-terminus, the 167-residue chain is Inclusion membrane protein G (167 aa).

Helical transmembrane passes span Val33 to Phe57 and Val63 to Leu88. The sufficient for interaction with human 14-3-3 beta protein stretch occupies residues Ser94–Phe167. A disordered region spans residues Lys97–Phe167. Residues Glu122–Leu135 are compositionally biased toward low complexity. A Phosphorylation-dependent binding motif motif is present at residues Arg161–Ser166. Ser166 carries the post-translational modification Phosphoserine.

In terms of assembly, in infected HeLa cells colocalizes with host 14-3-3 protein (YWHAB); phosphorylation of Ser-166 is probably required. Interacts with Pkn1. In terms of processing, phosphorylated, possibly at more than one position, in infected HeLa cells. Phosphorylated by chlamydial kinase Pnk1.

The protein localises to the secreted. It localises to the host vacuole. It is found in the host pathogen-containing vacuole. The protein resides in the host pathogen-containing vacuole membrane. In terms of biological role, inclusion membrane protein probably involved in early modification events of the chlamydial inclusion. This is Inclusion membrane protein G from Chlamydia trachomatis serovar L2 (strain ATCC VR-902B / DSM 19102 / 434/Bu).